Here is a 116-residue protein sequence, read N- to C-terminus: Putative iron-sulfur cluster insertion protein ErpA (116 aa).

3 residues coordinate iron-sulfur cluster: Cys44, Cys108, and Cys110.

This sequence belongs to the HesB/IscA family. Homodimer. Iron-sulfur cluster is required as a cofactor.

Its function is as follows. Required for insertion of 4Fe-4S clusters. The protein is Putative iron-sulfur cluster insertion protein ErpA of Dechloromonas aromatica (strain RCB).